The following is a 117-amino-acid chain: Acidic phospholipase A2 (117 aa).

7 disulfides stabilise this stretch: C11/C70, C25/C116, C27/C43, C42/C98, C49/C91, C59/C84, and C77/C89. Residues Y26, G28, and G30 each contribute to the Ca(2+) site. The active site involves H46. D47 lines the Ca(2+) pocket. N80 carries N-linked (GlcNAc...) asparagine glycosylation. D92 is a catalytic residue.

It depends on Ca(2+) as a cofactor. In terms of tissue distribution, expressed by the venom gland.

The protein resides in the secreted. The enzyme catalyses a 1,2-diacyl-sn-glycero-3-phosphocholine + H2O = a 1-acyl-sn-glycero-3-phosphocholine + a fatty acid + H(+). Its function is as follows. Snake venom phospholipase A2 (PLA2) that shows strong myotoxicity and induces edema in mice. Shows no cytotoxicity in vitro. Has a strong anticoagulant effect in vitro. PLA2 catalyzes the calcium-dependent hydrolysis of the 2-acyl groups in 3-sn-phosphoglycerides. In Micrurus dumerilii (Coral snake), this protein is Acidic phospholipase A2.